A 248-amino-acid polypeptide reads, in one-letter code: tRNA (guanine-N(1)-)-methyltransferase (248 aa).

S-adenosyl-L-methionine contacts are provided by residues Gly113 and 133–138 (IGDYVL).

It belongs to the RNA methyltransferase TrmD family. Homodimer.

It localises to the cytoplasm. The enzyme catalyses guanosine(37) in tRNA + S-adenosyl-L-methionine = N(1)-methylguanosine(37) in tRNA + S-adenosyl-L-homocysteine + H(+). Functionally, specifically methylates guanosine-37 in various tRNAs. This chain is tRNA (guanine-N(1)-)-methyltransferase, found in Shewanella loihica (strain ATCC BAA-1088 / PV-4).